Reading from the N-terminus, the 255-residue chain is Octanoyltransferase (255 aa).

The tract at residues 1–27 (MPPASDAHAAPDAAASTSASPQSCAAP) is disordered. One can recognise a BPL/LPL catalytic domain in the interval 59–240 (PDTGDEIWVV…RLIANLDGAT (182 aa)). Substrate-binding positions include 99–106 (RGGQITYH), 171–173 (ALG), and 184–186 (GLS). The active-site Acyl-thioester intermediate is cysteine 202.

Belongs to the LipB family.

Its subcellular location is the cytoplasm. The catalysed reaction is octanoyl-[ACP] + L-lysyl-[protein] = N(6)-octanoyl-L-lysyl-[protein] + holo-[ACP] + H(+). It functions in the pathway protein modification; protein lipoylation via endogenous pathway; protein N(6)-(lipoyl)lysine from octanoyl-[acyl-carrier-protein]: step 1/2. Its function is as follows. Catalyzes the transfer of endogenously produced octanoic acid from octanoyl-acyl-carrier-protein onto the lipoyl domains of lipoate-dependent enzymes. Lipoyl-ACP can also act as a substrate although octanoyl-ACP is likely to be the physiological substrate. The chain is Octanoyltransferase from Burkholderia thailandensis (strain ATCC 700388 / DSM 13276 / CCUG 48851 / CIP 106301 / E264).